Here is a 316-residue protein sequence, read N- to C-terminus: N-acetyl-gamma-glutamyl-phosphate reductase (316 aa).

Cysteine 136 is an active-site residue.

It belongs to the NAGSA dehydrogenase family. Type 1 subfamily.

The protein resides in the cytoplasm. The catalysed reaction is N-acetyl-L-glutamate 5-semialdehyde + phosphate + NADP(+) = N-acetyl-L-glutamyl 5-phosphate + NADPH + H(+). Its pathway is amino-acid biosynthesis; L-arginine biosynthesis; N(2)-acetyl-L-ornithine from L-glutamate: step 3/4. Functionally, catalyzes the NADPH-dependent reduction of N-acetyl-5-glutamyl phosphate to yield N-acetyl-L-glutamate 5-semialdehyde. The protein is N-acetyl-gamma-glutamyl-phosphate reductase of Xanthomonas euvesicatoria pv. vesicatoria (strain 85-10) (Xanthomonas campestris pv. vesicatoria).